The chain runs to 226 residues: Protein FMP52-1, mitochondrial (226 aa).

The N-terminal 43 residues, 1 to 43, are a transit peptide targeting the mitochondrion; it reads MSAFVLGSTGLVGLQILKVLDSSTAFKKVSTVSRRLPSVTSGK.

The protein belongs to the FMP52 family.

It is found in the mitochondrion outer membrane. The sequence is that of Protein FMP52-1, mitochondrial (FMP521) from Scheffersomyces stipitis (strain ATCC 58785 / CBS 6054 / NBRC 10063 / NRRL Y-11545) (Yeast).